Reading from the N-terminus, the 110-residue chain is Iron-sulfur cluster assembly protein CyaY (110 aa).

It belongs to the frataxin family.

Involved in iron-sulfur (Fe-S) cluster assembly. May act as a regulator of Fe-S biogenesis. The chain is Iron-sulfur cluster assembly protein CyaY from Pseudomonas fluorescens (strain Pf0-1).